A 302-amino-acid chain; its full sequence is Dermonecrotic toxin LiSicTox-alphaIA1bii (302 aa).

A signal peptide spans 1–14 (ARVVLGCWSVLSQA). A propeptide spanning residues 15 to 22 (AQTDDEER) is cleaved from the precursor. H34 is a catalytic residue. Residues E54 and D56 each coordinate Mg(2+). The Nucleophile role is filled by H70. 2 disulfides stabilise this stretch: C74–C80 and C76–C219. D114 is a Mg(2+) binding site.

Belongs to the arthropod phospholipase D family. Class II subfamily. Class IIa sub-subfamily. Mg(2+) serves as cofactor. In terms of tissue distribution, expressed by the venom gland.

The protein localises to the secreted. The catalysed reaction is an N-(acyl)-sphingosylphosphocholine = an N-(acyl)-sphingosyl-1,3-cyclic phosphate + choline. It catalyses the reaction an N-(acyl)-sphingosylphosphoethanolamine = an N-(acyl)-sphingosyl-1,3-cyclic phosphate + ethanolamine. The enzyme catalyses a 1-acyl-sn-glycero-3-phosphocholine = a 1-acyl-sn-glycero-2,3-cyclic phosphate + choline. It carries out the reaction a 1-acyl-sn-glycero-3-phosphoethanolamine = a 1-acyl-sn-glycero-2,3-cyclic phosphate + ethanolamine. In terms of biological role, dermonecrotic toxins cleave the phosphodiester linkage between the phosphate and headgroup of certain phospholipids (sphingolipid and lysolipid substrates), forming an alcohol (often choline) and a cyclic phosphate. This toxin acts on sphingomyelin (SM). It may also act on ceramide phosphoethanolamine (CPE), lysophosphatidylcholine (LPC) and lysophosphatidylethanolamine (LPE), but not on lysophosphatidylserine (LPS), and lysophosphatidylglycerol (LPG). It acts by transphosphatidylation, releasing exclusively cyclic phosphate products as second products. Induces hemolysis, dermonecrosis, vascular permeability and platelet aggregation. The sequence is that of Dermonecrotic toxin LiSicTox-alphaIA1bii from Loxosceles intermedia (Brown spider).